The chain runs to 277 residues: 4-diphosphocytidyl-2-C-methyl-D-erythritol kinase (277 aa).

Residue lysine 9 is part of the active site. 91-101 (PMGAGLGGGSS) contributes to the ATP binding site. Residue aspartate 133 is part of the active site.

Belongs to the GHMP kinase family. IspE subfamily.

The enzyme catalyses 4-CDP-2-C-methyl-D-erythritol + ATP = 4-CDP-2-C-methyl-D-erythritol 2-phosphate + ADP + H(+). Its pathway is isoprenoid biosynthesis; isopentenyl diphosphate biosynthesis via DXP pathway; isopentenyl diphosphate from 1-deoxy-D-xylulose 5-phosphate: step 3/6. In terms of biological role, catalyzes the phosphorylation of the position 2 hydroxy group of 4-diphosphocytidyl-2C-methyl-D-erythritol. The chain is 4-diphosphocytidyl-2-C-methyl-D-erythritol kinase from Acinetobacter baumannii (strain AB307-0294).